The chain runs to 492 residues: Amphoterin-induced protein 1 (492 aa).

The N-terminal stretch at 1 to 27 (MQPQRDLRGLWLLLLSVFLLLFEVARA) is a signal peptide. Residues 28–61 (GRSVVSCPANCLCASNILSCSKQQLPNVPQSLPS) form the LRRNT domain. Residues 28-371 (GRSVVSCPAN…LHGHHDTLNT (344 aa)) are Extracellular-facing. 2 disulfide bridges follow: C34/C40 and C38/C47. 6 LRR repeats span residues 62–83 (YTAL…WTPT), 87–108 (NLHS…AFVP), 111–132 (NLRY…LFSD), 135–156 (ALEV…AFED), 159–180 (QLQK…LIKD), and 186–206 (KLML…TDLQ). N72 carries an N-linked (GlcNAc...) asparagine glycan. Positions 208–272 (LPAWVKNGLY…FSLDFFNCSE (65 aa)) constitute an LRRCT domain. 3 disulfides stabilise this stretch: C225–C253, C227–C270, and C290–C340. Residues N269, N315, N348, and N359 are each glycosylated (N-linked (GlcNAc...) asparagine). In terms of domain architecture, Ig-like C2-type spans 269–352 (NCSEYKESAW…MGETFNETLS (84 aa)). The helical transmembrane segment at 372-392 (AYTTLVGCILSVVLVLIYLYL) threads the bilayer. Over 393 to 492 (TPCRCWCRGV…SVFSDTPIVV (100 aa)) the chain is Cytoplasmic. The tract at residues 404–492 (KPSSHQGDSL…SVFSDTPIVV (89 aa)) is disordered. The span at 407-423 (SHQGDSLSSSMLSTTPN) shows a compositional bias: polar residues. Residues 430-441 (GDKDDGFDRRVA) show a composition bias toward basic and acidic residues. 2 positions are modified to phosphoserine: S476 and S480.

Belongs to the immunoglobulin superfamily. AMIGO family. In terms of assembly, homodimer, and heterodimer with AMIGO2 and AMIGO3. Interacts with KCNB1. As to expression, expressed in hippocampal and cortical neurons (at protein level). High levels in cerebellum, cerebrum, and retina. Low levels in liver, kidney, small intestine, spleen, lung and heart.

The protein resides in the cell membrane. It is found in the perikaryon. Its subcellular location is the cell projection. The protein localises to the dendrite. Promotes growth and fasciculation of neurites from cultured hippocampal neurons. May be involved in fasciculation as well as myelination of developing neural axons. May have a role in regeneration as well as neural plasticity in the adult nervous system. May mediate homophilic as well as heterophilic cell-cell interaction and contribute to signal transduction through its intracellular domain. Assembled with KCNB1 modulates the gating characteristics of the delayed rectifier voltage-dependent potassium channel KCNB1. The chain is Amphoterin-induced protein 1 from Mus musculus (Mouse).